The following is a 329-amino-acid chain: UDP-glucose 4-epimerase (329 aa).

Residues 11–12 (YV), 31–36 (DNFSTG), 51–52 (DV), 71–75 (FAARS), Thr115, Tyr139, Lys143, and Phe167 each bind NAD(+). Positions 115 and 139 each coordinate substrate. The active-site Proton acceptor is Tyr139. Substrate is bound by residues Asn168, 185-186 (HL), 202-204 (FMF), Arg217, and 277-280 (RAGD).

This sequence belongs to the NAD(P)-dependent epimerase/dehydratase family. As to quaternary structure, homodimer. Requires NAD(+) as cofactor.

The enzyme catalyses UDP-alpha-D-glucose = UDP-alpha-D-galactose. It functions in the pathway carbohydrate metabolism; galactose metabolism. Involved in the metabolism of galactose. Catalyzes the conversion of UDP-galactose (UDP-Gal) to UDP-glucose (UDP-Glc) through a mechanism involving the transient reduction of NAD. The chain is UDP-glucose 4-epimerase (galE) from Corynebacterium glutamicum (strain ATCC 13032 / DSM 20300 / JCM 1318 / BCRC 11384 / CCUG 27702 / LMG 3730 / NBRC 12168 / NCIMB 10025 / NRRL B-2784 / 534).